The chain runs to 231 residues: 2-C-methyl-D-erythritol 4-phosphate cytidylyltransferase (231 aa).

Belongs to the IspD/TarI cytidylyltransferase family. IspD subfamily.

The catalysed reaction is 2-C-methyl-D-erythritol 4-phosphate + CTP + H(+) = 4-CDP-2-C-methyl-D-erythritol + diphosphate. It participates in isoprenoid biosynthesis; isopentenyl diphosphate biosynthesis via DXP pathway; isopentenyl diphosphate from 1-deoxy-D-xylulose 5-phosphate: step 2/6. Catalyzes the formation of 4-diphosphocytidyl-2-C-methyl-D-erythritol from CTP and 2-C-methyl-D-erythritol 4-phosphate (MEP). The sequence is that of 2-C-methyl-D-erythritol 4-phosphate cytidylyltransferase from Clostridium novyi (strain NT).